The chain runs to 506 residues: Tabersonine 16-hydroxylase 1 (506 aa).

Residues 1–21 form a helical membrane-spanning segment; the sequence is MEFYYFLYLAFLLFCFILSKT. Cys-447 contacts heme.

Belongs to the cytochrome P450 family. The cofactor is heme. Predominantly expressed in young leaves of mature plants. Low expression in roots and flowers, but not detected in stems and old leaves. Found predominantly in leaf epidermis. Barely detected in roots, internodes, young and mature leaves, and flower buds, but relatively abundant in fully developed flowers. Not detected in leaf epidermal cells.

It localises to the endoplasmic reticulum membrane. It carries out the reaction (-)-tabersonine + reduced [NADPH--hemoprotein reductase] + O2 = 16-hydroxytabersonine + oxidized [NADPH--hemoprotein reductase] + H2O + H(+). Its pathway is alkaloid biosynthesis; vindoline biosynthesis. Functionally, involved in the flower biosynthesis of vindoline, a precursor of vinblastine and vincristine. Hydroxylates specifically tabersonine, 2,3-dihydrotabersonine and 2,3-dihydro-3-hydroxytabersonine, but has no activity with naringenin, tryptamine, secologanin, strictosidine, ajmalicine, vindoline and catharanthine. The chain is Tabersonine 16-hydroxylase 1 from Catharanthus roseus (Madagascar periwinkle).